A 502-amino-acid polypeptide reads, in one-letter code: Lysine--tRNA ligase (502 aa).

The Mg(2+) site is built by Glu403 and Glu410.

The protein belongs to the class-II aminoacyl-tRNA synthetase family. In terms of assembly, homodimer. It depends on Mg(2+) as a cofactor.

The protein localises to the cytoplasm. It carries out the reaction tRNA(Lys) + L-lysine + ATP = L-lysyl-tRNA(Lys) + AMP + diphosphate. The chain is Lysine--tRNA ligase from Synechococcus sp. (strain CC9902).